The following is a 501-amino-acid chain: L-lysine transport protein (501 aa).

Helical transmembrane passes span 25–41 (LIAL…IFSI), 52–76 (GAML…HVLA), 92–113 (VGLG…SVIA), 138–155 (FVSA…FGVV), 174–191 (ILPL…GFSW), 214–232 (GIMV…ASVY), 247–269 (VIGF…GVLT), 292–316 (WGAA…QMLC), 340–362 (GAAW…IFFL), 377–393 (LYLV…VMLA), 424–440 (LIVG…LFYA), 447–463 (LFGA…YVWT), and 477–495 (IGVV…IGLV).

Belongs to the amino acid-polyamine-organocation (APC) superfamily. Basic amino acid/polyamine antiporter (APA) (TC 2.A.3.2) family.

It is found in the cell membrane. Functionally, permease that is involved in the transport across the membrane of lysine. The polypeptide is L-lysine transport protein (lysI) (Corynebacterium glutamicum (strain ATCC 13032 / DSM 20300 / JCM 1318 / BCRC 11384 / CCUG 27702 / LMG 3730 / NBRC 12168 / NCIMB 10025 / NRRL B-2784 / 534)).